Here is a 331-residue protein sequence, read N- to C-terminus: UDP-GalNAc:beta-1,3-N-acetylgalactosaminyltransferase 1 (331 aa).

The Cytoplasmic portion of the chain corresponds to 1-20; that stretch reads MASALWTVLPSRMSLRSLQW. The chain crosses the membrane as a helical; Signal-anchor for type II membrane protein span at residues 21 to 43; that stretch reads SLLLLSLLSFLVMWYLSLPHYNV. At 44-331 the chain is on the lumenal side; it reads IERVNWMYFY…VMLRNTTCHY (288 aa). N-linked (GlcNAc...) asparagine glycosylation is found at Asn-72, Asn-154, Asn-198, Asn-212, and Asn-326.

This sequence belongs to the glycosyltransferase 31 family. Mg(2+) serves as cofactor.

It is found in the golgi apparatus membrane. It carries out the reaction a globoside Gb3Cer (d18:1(4E)) + UDP-N-acetyl-alpha-D-galactosamine = a globoside Gb4Cer (d18:1(4E)) + UDP + H(+). Its pathway is protein modification; protein glycosylation. Functionally, transfers N-acetylgalactosamine onto globotriaosylceramide. Plays a critical role in preimplantation stage embryonic development. This Pongo abelii (Sumatran orangutan) protein is UDP-GalNAc:beta-1,3-N-acetylgalactosaminyltransferase 1 (B3GALNT1).